We begin with the raw amino-acid sequence, 527 residues long: T-complex protein 1 subunit beta (527 aa).

The protein belongs to the TCP-1 chaperonin family. As to quaternary structure, heterooligomeric complex of about 850 to 900 kDa that forms two stacked rings, 12 to 16 nm in diameter.

It localises to the cytoplasm. Its function is as follows. Molecular chaperone; assists the folding of proteins upon ATP hydrolysis. Known to play a role, in vitro, in the folding of actin and tubulin. The chain is T-complex protein 1 subunit beta from Arabidopsis thaliana (Mouse-ear cress).